A 94-amino-acid polypeptide reads, in one-letter code: Pyrimidine/purine nucleoside phosphorylase (94 aa).

This sequence belongs to the nucleoside phosphorylase PpnP family.

It catalyses the reaction a purine D-ribonucleoside + phosphate = a purine nucleobase + alpha-D-ribose 1-phosphate. The catalysed reaction is adenosine + phosphate = alpha-D-ribose 1-phosphate + adenine. It carries out the reaction cytidine + phosphate = cytosine + alpha-D-ribose 1-phosphate. The enzyme catalyses guanosine + phosphate = alpha-D-ribose 1-phosphate + guanine. It catalyses the reaction inosine + phosphate = alpha-D-ribose 1-phosphate + hypoxanthine. The catalysed reaction is thymidine + phosphate = 2-deoxy-alpha-D-ribose 1-phosphate + thymine. It carries out the reaction uridine + phosphate = alpha-D-ribose 1-phosphate + uracil. The enzyme catalyses xanthosine + phosphate = alpha-D-ribose 1-phosphate + xanthine. Functionally, catalyzes the phosphorolysis of diverse nucleosides, yielding D-ribose 1-phosphate and the respective free bases. Can use uridine, adenosine, guanosine, cytidine, thymidine, inosine and xanthosine as substrates. Also catalyzes the reverse reactions. This is Pyrimidine/purine nucleoside phosphorylase from Vibrio parahaemolyticus serotype O3:K6 (strain RIMD 2210633).